The chain runs to 90 residues: Large ribosomal subunit protein uL16c (90 aa).

This sequence belongs to the universal ribosomal protein uL16 family. In terms of assembly, part of the 50S ribosomal subunit.

The protein resides in the plastid. Its subcellular location is the chloroplast. This is Large ribosomal subunit protein uL16c (rpl16) from Oenothera ammophila (Evening primerose).